A 237-amino-acid chain; its full sequence is Thiamine-phosphate synthase (237 aa).

4-amino-2-methyl-5-(diphosphooxymethyl)pyrimidine-binding positions include Gln57–Lys61 and Asn98. 2 residues coordinate Mg(2+): Asp99 and Asp118. 4-amino-2-methyl-5-(diphosphooxymethyl)pyrimidine is bound at residue Ser136. Thr162–Thr164 lines the 2-[(2R,5Z)-2-carboxy-4-methylthiazol-5(2H)-ylidene]ethyl phosphate pocket. Lys165 is a 4-amino-2-methyl-5-(diphosphooxymethyl)pyrimidine binding site. Gly193 contacts 2-[(2R,5Z)-2-carboxy-4-methylthiazol-5(2H)-ylidene]ethyl phosphate.

It belongs to the thiamine-phosphate synthase family. The cofactor is Mg(2+).

The catalysed reaction is 2-[(2R,5Z)-2-carboxy-4-methylthiazol-5(2H)-ylidene]ethyl phosphate + 4-amino-2-methyl-5-(diphosphooxymethyl)pyrimidine + 2 H(+) = thiamine phosphate + CO2 + diphosphate. It catalyses the reaction 2-(2-carboxy-4-methylthiazol-5-yl)ethyl phosphate + 4-amino-2-methyl-5-(diphosphooxymethyl)pyrimidine + 2 H(+) = thiamine phosphate + CO2 + diphosphate. The enzyme catalyses 4-methyl-5-(2-phosphooxyethyl)-thiazole + 4-amino-2-methyl-5-(diphosphooxymethyl)pyrimidine + H(+) = thiamine phosphate + diphosphate. It functions in the pathway cofactor biosynthesis; thiamine diphosphate biosynthesis; thiamine phosphate from 4-amino-2-methyl-5-diphosphomethylpyrimidine and 4-methyl-5-(2-phosphoethyl)-thiazole: step 1/1. Functionally, condenses 4-methyl-5-(beta-hydroxyethyl)thiazole monophosphate (THZ-P) and 2-methyl-4-amino-5-hydroxymethyl pyrimidine pyrophosphate (HMP-PP) to form thiamine monophosphate (TMP). In Mycolicibacterium gilvum (strain PYR-GCK) (Mycobacterium gilvum (strain PYR-GCK)), this protein is Thiamine-phosphate synthase.